Reading from the N-terminus, the 281-residue chain is Bifunctional protein FolD (281 aa).

Residues 161–163, S186, and I227 each bind NADP(+); that span reads GRS.

The protein belongs to the tetrahydrofolate dehydrogenase/cyclohydrolase family. As to quaternary structure, homodimer.

The catalysed reaction is (6R)-5,10-methylene-5,6,7,8-tetrahydrofolate + NADP(+) = (6R)-5,10-methenyltetrahydrofolate + NADPH. It carries out the reaction (6R)-5,10-methenyltetrahydrofolate + H2O = (6R)-10-formyltetrahydrofolate + H(+). The protein operates within one-carbon metabolism; tetrahydrofolate interconversion. Catalyzes the oxidation of 5,10-methylenetetrahydrofolate to 5,10-methenyltetrahydrofolate and then the hydrolysis of 5,10-methenyltetrahydrofolate to 10-formyltetrahydrofolate. The protein is Bifunctional protein FolD of Brachyspira hyodysenteriae (strain ATCC 49526 / WA1).